The chain runs to 388 residues: L-lactate dehydrogenase (388 aa).

An FMN hydroxy acid dehydrogenase domain is found at 1–380 (MIISAASDYR…SADALSRVTR (380 aa)). Substrate is bound at residue Y24. Positions 106 and 127 each coordinate FMN. Residue Y129 participates in substrate binding. T155 contacts FMN. R164 contacts substrate. FMN is bound at residue K251. The active-site Proton acceptor is H275. Position 278 (R278) interacts with substrate. 306–330 (DSGIRSGLDVVRMLALGADAVLLGR) contacts FMN.

The protein belongs to the FMN-dependent alpha-hydroxy acid dehydrogenase family. Requires FMN as cofactor.

Its subcellular location is the cell inner membrane. The catalysed reaction is (S)-lactate + A = pyruvate + AH2. In terms of biological role, catalyzes the conversion of L-lactate to pyruvate. Is coupled to the respiratory chain. This chain is L-lactate dehydrogenase, found in Xanthomonas oryzae pv. oryzae (strain MAFF 311018).